The chain runs to 348 residues: MVEGESKALWIILATVFAVAAVAPAVHGQQTPCYFVFGDSVFDNGNNNALNTKAKVNYLPYGIDYFQGPTGRFSNGRNIPDVIAELAGFNNPIPPFAGASQAQANIGLNYASGAGGIREETSENMGERISLRQQVNNHFSAIITAAVPLSRLRQCLYTINIGSNDYLNNYFLSPPTLARRLFNPDQYARSLISLYRIYLTQLYVLGARNVALFGIGKIGCTPRIVATLGGGTGCAEEVNQAVIIFNTKLKALVTDFNNKPGAMFTYVDLFSGNAEDFAALGITVGDRSCCTVNPGEELCAANGPVCPDRNKFIFWDNVHTTEVINTVVANAAFNGPIASPFNISQLVN.

The N-terminal stretch at 1–28 is a signal peptide; sequence MVEGESKALWIILATVFAVAAVAPAVHG. Serine 40 serves as the catalytic Nucleophile. Catalysis depends on residues aspartate 316 and histidine 319. Asparagine 342 carries N-linked (GlcNAc...) asparagine glycosylation.

Belongs to the 'GDSL' lipolytic enzyme family.

The protein resides in the secreted. The polypeptide is GDSL esterase/lipase At4g30140 (Arabidopsis thaliana (Mouse-ear cress)).